Consider the following 403-residue polypeptide: RILP-like protein 1 (403 aa).

Serine 7 carries the phosphoserine modification. The RH1 domain occupies 10–97 (AAESALEKNV…RLERMDRIEK (88 aa)). Cysteine 47 is modified (S-nitrosocysteine). Residues 76–258 (ELDELRLELD…KLRERLQGEH (183 aa)) are a coiled coil. 3 disordered regions span residues 254–275 (LQGE…GEES), 327–352 (EMEE…PESG), and 384–403 (ANTH…LQHL). The residue at position 259 (serine 259) is a Phosphoserine. Residues 262-275 (GEEEPETEPVGEES) are compositionally biased toward acidic residues. The RH2 domain maps to 291–356 (RPRFTLQELR…PQPESGIKRL (66 aa)). The span at 394–403 (EQGQEALQHL) shows a compositional bias: polar residues.

This sequence belongs to the RILPL family. In terms of assembly, interacts (when S-nitrosylated) with GAPDH. Interacts with RAB8A; interaction is dependent on the phosphorylation of 'Thr-72' of RAB8A. Interacts with RAB10 and RAB12; the interaction is dependent on the phosphorylation of 'Thr-73' of RAB10, and 'Ser-105' of RAB12. Post-translationally, S-nitrosylation is required for the interaction with GAPDH. As to expression, widely expressed. Expressed at lower level in liver and kidney.

Its subcellular location is the cytoplasm. It is found in the cytosol. It localises to the cytoskeleton. The protein resides in the microtubule organizing center. The protein localises to the centrosome. Its subcellular location is the centriole. It is found in the cilium basal body. In terms of biological role, plays a role in the regulation of cell shape and polarity. Plays a role in cellular protein transport, including protein transport away from primary cilia. Neuroprotective protein, which acts by sequestring GAPDH in the cytosol and prevent the apoptotic function of GAPDH in the nucleus. Competes with SIAH1 for binding GAPDH. Does not regulate lysosomal morphology and distribution. Binds to RAB10 following LRRK2-mediated RAB10 phosphorylation which leads to inhibition of ciliogenesis. The polypeptide is RILP-like protein 1 (RILPL1) (Homo sapiens (Human)).